Consider the following 157-residue polypeptide: Transmembrane protein 50A (157 aa).

The residue at position 2 (S2) is an N-acetylserine. The residue at position 2 (S2) is a Phosphoserine. 4 helical membrane passes run 26-46 (IAAG…AVIY), 58-78 (ACGV…NGQV), 95-115 (IWLF…MWIL), and 126-146 (IVYP…GGLV).

The protein belongs to the UPF0220 family.

Its subcellular location is the membrane. This Homo sapiens (Human) protein is Transmembrane protein 50A (TMEM50A).